The sequence spans 116 residues: MKTIIVFLSLLVLATKFGDAKEGVNQEQKKEVTQNEFRVEYLNEMAAMSLLQQLEAIESALFEKEAGRNSRQKRCNGKNVPCGANHSPCCSGLSCEETFGYGWLYKSPYCVIPSNG.

A signal peptide spans 1 to 20; that stretch reads MKTIIVFLSLLVLATKFGDA. Residues 21–74 constitute a propeptide that is removed on maturation; the sequence is KEGVNQEQKKEVTQNEFRVEYLNEMAAMSLLQQLEAIESALFEKEAGRNSRQKR. Cystine bridges form between C75–C90, C82–C95, and C89–C110.

The protein belongs to the neurotoxin 14 (magi-1) family. 06 (ICK-Trit) subfamily. In terms of tissue distribution, expressed by the venom gland.

It localises to the secreted. Ion channel inhibitor. The chain is U16-barytoxin-Tl1a from Trittame loki (Brush-footed trapdoor spider).